The sequence spans 747 residues: Protein MTSS 2 (747 aa).

Positions 1-252 (METAEKECGA…EQVIKDLKGS (252 aa)) constitute an IMD domain. Positions 135–159 (EIKKKSSDTLKLQKKARKELLGKGD) form a coiled coil. 3 stretches are compositionally biased toward low complexity: residues 256–284 (WSYQTPPSSPSSSSSRKSSMCSAPSSSSS), 321–332 (SSVSSHDSGFVS), and 349–367 (TSQKSSSSASSEASETCQS). Disordered regions lie at residues 256-302 (WSYQ…YSPS), 318-441 (ARLS…EEVS), 457-522 (LEHQ…RNSN), and 543-599 (PTAG…PTVP). Threonine 260 is subject to Phosphothreonine. Serine 264 carries the phosphoserine modification. The span at 368 to 378 (VSECSSPTSDW) shows a compositional bias: polar residues. A compositionally biased stretch (basic and acidic residues) spans 397 to 406 (DRVELLRDTE). Serine 441 carries the post-translational modification Phosphoserine. Residues 466-479 (SLQYSSGYSTQTTT) are compositionally biased toward low complexity. Over residues 480–492 (PSCSEDTIPSQGS) the composition is skewed to polar residues. A phosphoserine mark is found at serine 579, serine 601, serine 612, serine 624, serine 634, and serine 639. 2 disordered regions span residues 638–664 (LSLPNTAWGSPSPEAAGYPGAGAEDEQ) and 691–720 (GQFPFPTALSATPTEETPTPPPAATSDPPA). The residue at position 643 (threonine 643) is a Phosphothreonine. Low complexity-rich tracts occupy residues 646 to 659 (GSPSPEAAGYPGAG) and 696 to 707 (PTALSATPTEET). A WH2 domain is found at 719 to 736 (PAEDMLVAIRRGVRLRRT).

Belongs to the MTSS family. As to quaternary structure, interacts (via IMD domain) with RAC1; this interaction may be important to potentiate PDGF-induced RAC1 activation.

The protein resides in the cytoplasm. The protein localises to the cell projection. It is found in the ruffle. Involved in plasma membrane dynamics. Potentiated PDGF-mediated formation of membrane ruffles and lamellipodia in fibroblasts, acting via RAC1 activation. May function in actin bundling. This chain is Protein MTSS 2, found in Homo sapiens (Human).